The sequence spans 307 residues: Protoheme IX farnesyltransferase (307 aa).

The next 9 membrane-spanning stretches (helical) occupy residues valine 29–proline 49, leucine 51–phenylalanine 71, alanine 101–alanine 120, alanine 124–leucine 143, isoleucine 151–glycine 171, phenylalanine 179–isoleucine 199, arginine 218–proline 238, valine 239–leucine 259, and valine 280–alanine 300.

It belongs to the UbiA prenyltransferase family. Protoheme IX farnesyltransferase subfamily.

The protein resides in the cell membrane. The enzyme catalyses heme b + (2E,6E)-farnesyl diphosphate + H2O = Fe(II)-heme o + diphosphate. Its pathway is porphyrin-containing compound metabolism; heme O biosynthesis; heme O from protoheme: step 1/1. Converts heme B (protoheme IX) to heme O by substitution of the vinyl group on carbon 2 of heme B porphyrin ring with a hydroxyethyl farnesyl side group. This is Protoheme IX farnesyltransferase from Deinococcus geothermalis (strain DSM 11300 / CIP 105573 / AG-3a).